We begin with the raw amino-acid sequence, 581 residues long: Probable peptidoglycan D,D-transpeptidase PenA (581 aa).

Residues 28-48 (ISFVLMAIAVLFAGLIARGLY) form a helical membrane-spanning segment. Residue serine 310 is the Acyl-ester intermediate of the active site.

Belongs to the transpeptidase family. FtsI subfamily.

Its subcellular location is the cell inner membrane. The enzyme catalyses Preferential cleavage: (Ac)2-L-Lys-D-Ala-|-D-Ala. Also transpeptidation of peptidyl-alanyl moieties that are N-acyl substituents of D-alanine.. The protein operates within cell wall biogenesis; peptidoglycan biosynthesis. Functionally, catalyzes cross-linking of the peptidoglycan cell wall at the division septum. The protein is Probable peptidoglycan D,D-transpeptidase PenA of Neisseria meningitidis serogroup A / serotype 4A (strain DSM 15465 / Z2491).